The sequence spans 228 residues: Sec-independent protein translocase protein TatB (228 aa).

Residues 1–21 (MFDFGLGELVFVGIIALIVLG) form a helical membrane-spanning segment. 2 disordered regions span residues 109–162 (DFGV…AETD) and 197–228 (PHTTSLRKQAISRKRDFRPKHRAKPKLRVRKS). Residues 206 to 228 (AISRKRDFRPKHRAKPKLRVRKS) are compositionally biased toward basic residues.

This sequence belongs to the TatB family. The Tat system comprises two distinct complexes: a TatABC complex, containing multiple copies of TatA, TatB and TatC subunits, and a separate TatA complex, containing only TatA subunits. Substrates initially bind to the TatABC complex, which probably triggers association of the separate TatA complex to form the active translocon.

It localises to the cell inner membrane. Part of the twin-arginine translocation (Tat) system that transports large folded proteins containing a characteristic twin-arginine motif in their signal peptide across membranes. Together with TatC, TatB is part of a receptor directly interacting with Tat signal peptides. TatB may form an oligomeric binding site that transiently accommodates folded Tat precursor proteins before their translocation. The polypeptide is Sec-independent protein translocase protein TatB (Neisseria meningitidis serogroup B (strain ATCC BAA-335 / MC58)).